The sequence spans 228 residues: 7-cyano-7-deazaguanine synthase (228 aa).

8–18 (LSGGMDSATTL) lines the ATP pocket. C188, C198, C201, and C204 together coordinate Zn(2+).

Belongs to the QueC family. It depends on Zn(2+) as a cofactor.

The enzyme catalyses 7-carboxy-7-deazaguanine + NH4(+) + ATP = 7-cyano-7-deazaguanine + ADP + phosphate + H2O + H(+). The protein operates within purine metabolism; 7-cyano-7-deazaguanine biosynthesis. Catalyzes the ATP-dependent conversion of 7-carboxy-7-deazaguanine (CDG) to 7-cyano-7-deazaguanine (preQ(0)). The chain is 7-cyano-7-deazaguanine synthase from Nitrosomonas europaea (strain ATCC 19718 / CIP 103999 / KCTC 2705 / NBRC 14298).